The primary structure comprises 113 residues: Nascent polypeptide-associated complex protein (113 aa).

The NAC-A/B domain maps to 5 to 73 (GMNPAKMKQM…AKEVPKSLEI (69 aa)).

This sequence belongs to the NAC-alpha family. In terms of assembly, homodimer. Interacts with the ribosome. Binds ribosomal RNA.

In terms of biological role, contacts the emerging nascent chain on the ribosome. This Methanosarcina acetivorans (strain ATCC 35395 / DSM 2834 / JCM 12185 / C2A) protein is Nascent polypeptide-associated complex protein.